Consider the following 152-residue polypeptide: Ribosome maturation factor RimP (152 aa).

It belongs to the RimP family.

The protein resides in the cytoplasm. Functionally, required for maturation of 30S ribosomal subunits. This Clostridium beijerinckii (strain ATCC 51743 / NCIMB 8052) (Clostridium acetobutylicum) protein is Ribosome maturation factor RimP.